Reading from the N-terminus, the 89-residue chain is Small ribosomal subunit protein uS14 (89 aa).

This sequence belongs to the universal ribosomal protein uS14 family. As to quaternary structure, part of the 30S ribosomal subunit. Contacts proteins S3 and S10.

Binds 16S rRNA, required for the assembly of 30S particles and may also be responsible for determining the conformation of the 16S rRNA at the A site. This chain is Small ribosomal subunit protein uS14, found in Pelodictyon phaeoclathratiforme (strain DSM 5477 / BU-1).